The primary structure comprises 237 residues: tRNA (guanine-N(7)-)-methyltransferase (237 aa).

S-adenosyl-L-methionine-binding residues include E67, E92, D119, and D142. D142 is a catalytic residue. Substrate is bound by residues K146, D178, and 215–218 (TKFE).

This sequence belongs to the class I-like SAM-binding methyltransferase superfamily. TrmB family.

The enzyme catalyses guanosine(46) in tRNA + S-adenosyl-L-methionine = N(7)-methylguanosine(46) in tRNA + S-adenosyl-L-homocysteine. The protein operates within tRNA modification; N(7)-methylguanine-tRNA biosynthesis. Its function is as follows. Catalyzes the formation of N(7)-methylguanine at position 46 (m7G46) in tRNA. This chain is tRNA (guanine-N(7)-)-methyltransferase, found in Aeromonas hydrophila subsp. hydrophila (strain ATCC 7966 / DSM 30187 / BCRC 13018 / CCUG 14551 / JCM 1027 / KCTC 2358 / NCIMB 9240 / NCTC 8049).